Consider the following 494-residue polypeptide: Glycerol kinase (494 aa).

Thr13 lines the ADP pocket. ATP is bound by residues Thr13, Thr14, and Ser15. A sn-glycerol 3-phosphate-binding site is contributed by Thr13. Arg17 lines the ADP pocket. Arg83, Glu84, Tyr135, and Asp244 together coordinate sn-glycerol 3-phosphate. Arg83, Glu84, Tyr135, Asp244, and Gln245 together coordinate glycerol. Thr266 and Gly309 together coordinate ADP. 4 residues coordinate ATP: Thr266, Gly309, Gln313, and Gly410. Residues Gly410 and Asn414 each contribute to the ADP site.

This sequence belongs to the FGGY kinase family.

The enzyme catalyses glycerol + ATP = sn-glycerol 3-phosphate + ADP + H(+). It functions in the pathway polyol metabolism; glycerol degradation via glycerol kinase pathway; sn-glycerol 3-phosphate from glycerol: step 1/1. Inhibited by fructose 1,6-bisphosphate (FBP). Functionally, key enzyme in the regulation of glycerol uptake and metabolism. Catalyzes the phosphorylation of glycerol to yield sn-glycerol 3-phosphate. In Shewanella baltica (strain OS195), this protein is Glycerol kinase.